Here is a 164-residue protein sequence, read N- to C-terminus: S-ribosylhomocysteine lyase (164 aa).

Fe cation-binding residues include histidine 54, histidine 58, and cysteine 128.

The protein belongs to the LuxS family. As to quaternary structure, homodimer. The cofactor is Fe cation.

It catalyses the reaction S-(5-deoxy-D-ribos-5-yl)-L-homocysteine = (S)-4,5-dihydroxypentane-2,3-dione + L-homocysteine. Involved in the synthesis of autoinducer 2 (AI-2) which is secreted by bacteria and is used to communicate both the cell density and the metabolic potential of the environment. The regulation of gene expression in response to changes in cell density is called quorum sensing. Catalyzes the transformation of S-ribosylhomocysteine (RHC) to homocysteine (HC) and 4,5-dihydroxy-2,3-pentadione (DPD). This is S-ribosylhomocysteine lyase from Campylobacter jejuni subsp. jejuni serotype O:23/36 (strain 81-176).